The following is a 123-amino-acid chain: UPF0102 protein Mflv_4140 (123 aa).

The protein belongs to the UPF0102 family.

This chain is UPF0102 protein Mflv_4140, found in Mycolicibacterium gilvum (strain PYR-GCK) (Mycobacterium gilvum (strain PYR-GCK)).